A 401-amino-acid chain; its full sequence is Elongation factor Tu 1 (401 aa).

The region spanning 10 to 209 (KPHVNVGTIG…AVDEYIPTPV (200 aa)) is the tr-type G domain. The segment at 19-26 (GHVDHGKT) is G1. 19 to 26 (GHVDHGKT) serves as a coordination point for GTP. Residue T26 coordinates Mg(2+). Positions 60 to 64 (GITIA) are G2. The G3 stretch occupies residues 81 to 84 (DCPG). GTP-binding positions include 81–85 (DCPGH) and 136–139 (NKVD). Positions 136-139 (NKVD) are G4. The interval 174–176 (SAL) is G5.

This sequence belongs to the TRAFAC class translation factor GTPase superfamily. Classic translation factor GTPase family. EF-Tu/EF-1A subfamily. As to quaternary structure, monomer.

It localises to the cytoplasm. It catalyses the reaction GTP + H2O = GDP + phosphate + H(+). Functionally, GTP hydrolase that promotes the GTP-dependent binding of aminoacyl-tRNA to the A-site of ribosomes during protein biosynthesis. The protein is Elongation factor Tu 1 of Roseiflexus sp. (strain RS-1).